Reading from the N-terminus, the 314-residue chain is Transcription factor SOX-12 (314 aa).

2 disordered regions span residues 1–40 (MVQQRGARAKRDGGPPPPGPGPAAEGAREPGWCKTPSGHI) and 101–287 (MADY…FEFP). A DNA-binding region (HMG box) is located at residues 40 to 108 (IKRPMNAFMV…KHMADYPDYK (69 aa)). Gly residues predominate over residues 149-159 (RASGGPLGGGA). The segment covering 162-173 (PEDDDEDEEEEL) has biased composition (acidic residues). The span at 174-187 (LEVRLLETPGRELW) shows a compositional bias: basic and acidic residues. The span at 191–217 (PAGRAARGPAERAQGPSGEGAAASAAS) shows a compositional bias: low complexity. Over residues 221 to 243 (SEDEEPEEEEEEAATAEEGEEET) the composition is skewed to acidic residues. Residues 282–314 (SHFEFPDYCTPEVTEMIAGDWRSSSIADLVFTY) form a required for transcriptional activation activity and synergistic coactivation of transcriptional activity with POU3F2 region.

Expressed in splenic and thymic regulatory T-cells (at protein level). Expressed in embryonic molar and incisor teeth.

It is found in the nucleus. Transcription factor that binds to DNA at the consensus sequence 5'-ACCAAAG-3'. Acts as a transcriptional activator. Binds cooperatively with POU3F2/BRN2 or POU3F1/OCT6 to gene promoters, which enhances transcriptional activation. Involved in the differentiation of naive CD4-positive T-cells into peripherally induced regulatory T (pT reg) cells under inflammatory conditions. Binds to the promoter region of the FOXP3 gene and promotes its transcription, and might thereby contribute to pT reg cell differentiation in the spleen and lymph nodes during inflammation. Plays a redundant role with SOX4 and SOX11 in cell survival of developing tissues such as the neural tube, branchial arches and somites, thereby contributing to organogenesis. The protein is Transcription factor SOX-12 (Sox12) of Mus musculus (Mouse).